Reading from the N-terminus, the 509-residue chain is Cation transporter HKT2;4 (509 aa).

Over 1–32 (MPIRLHIFVSSARHAINSSALICRFIAFHLSP) the chain is Cytoplasmic. A run of 2 helical transmembrane segments spans residues 33–53 (LLIHLSYFLIIDVLGFVALVV) and 96–116 (VLTLLMFLGSEMFLSFLGLVL). Residues 117-164 (ESSKQNKHDPENRRVSSVTVCEQSHLEEAIPQTPSMNSTDIKRSCHKY) are Cytoplasmic-facing. Transmembrane regions (helical) follow at residues 165 to 185 (LVFVVLAYMIIILVTGSLLVF) and 237 to 257 (GLLLLLIGQILAGSTLLPMFL). Over 258–296 (RLVIWALRGLRLAKAEEPDFMMNNSSSVGFSHLLPNLQT) the chain is Cytoplasmic. 2 helical membrane-spanning segments follow: residues 297–317 (IFLAAVEVAFVGMTVILFCCL) and 353–373 (CSLVAPAALVLFMVMMYTPSL). At 374 to 400 (TKLFSACQDHKQIGPESDDRTSKGKPF) the chain is on the cytoplasmic side. The next 2 membrane-spanning stretches (helical) occupy residues 401-421 (LKTMAFSPLAFNTTVIMLVCI) and 476-496 (SFSGWWSEPGKLILVLAMLYG). The Cytoplasmic portion of the chain corresponds to 497 to 509 (RLNSKDSTSARTR).

Belongs to the TrkH potassium transport family. HKT (TC 2.A.38.3) subfamily. In terms of tissue distribution, expressed in spikelets, leaf blades, leaf sheaths, internodes, nodes, the base of stems and roots.

It localises to the cell membrane. It catalyses the reaction K(+)(in) = K(+)(out). The catalysed reaction is Mg(2+)(in) = Mg(2+)(out). It carries out the reaction Ca(2+)(in) = Ca(2+)(out). Its function is as follows. High-affinity potassium transporter that does not show potassium-sodium cotransport. Potassium transport seems to be independent of sodium. Mediates transport of the divalent cations magnesium and calcium in the absence of competing potassium ions. Selectivity for potassium is dominant over divalent cations, and magnesium and calcium transport may be small and may depend on competing potassium concentrations. This chain is Cation transporter HKT2;4, found in Oryza sativa subsp. japonica (Rice).